We begin with the raw amino-acid sequence, 104 residues long: Ig kappa chain V region XP-1 (104 aa).

Residues 1 to 24 (ADIVMTQTPASVSEPVGGTVTIKC) are framework-1. The tract at residues 25–35 (QASQSIFBBLA) is complementarity-determining-1. The framework-2 stretch occupies residues 36 to 49 (WYQKPGZPPKGLLY). The tract at residues 50–56 (TBYTLAS) is complementarity-determining-2. A framework-3 region spans residues 57–88 (GVSSRFSGGGSGTBFTLTISDLECABAATYYC). Residues 89 to 100 (EXTGVSZBXBKG) form a complementarity-determining-3 region. The interval 101 to 104 (FGGG) is framework-4.

The protein is Ig kappa chain V region XP-1 of Oryctolagus cuniculus (Rabbit).